A 535-amino-acid polypeptide reads, in one-letter code: CTP synthase (535 aa).

Residues 1–267 (MTKYIFVTGG…DQIVCDHLKL (267 aa)) form an amidoligase domain region. Residue Ser13 participates in CTP binding. UTP is bound at residue Ser13. ATP is bound at residue 14–19 (SLGKGI). Position 54 (Tyr54) interacts with L-glutamine. Asp71 lines the ATP pocket. Mg(2+)-binding residues include Asp71 and Glu141. Residues 148 to 150 (DIE), 188 to 193 (KTKPTQ), and Lys224 each bind CTP. UTP contacts are provided by residues 188–193 (KTKPTQ) and Lys224. ATP is bound at residue 240-242 (RDA). A Glutamine amidotransferase type-1 domain is found at 292–534 (KIALVGKYVE…VSASITNKES (243 aa)). Gly354 provides a ligand contact to L-glutamine. The active-site Nucleophile; for glutamine hydrolysis is the Cys381. L-glutamine is bound by residues 382-385 (LGMQ), Glu405, and Arg462. Active-site residues include His507 and Glu509.

The protein belongs to the CTP synthase family. In terms of assembly, homotetramer.

The enzyme catalyses UTP + L-glutamine + ATP + H2O = CTP + L-glutamate + ADP + phosphate + 2 H(+). The catalysed reaction is L-glutamine + H2O = L-glutamate + NH4(+). It carries out the reaction UTP + NH4(+) + ATP = CTP + ADP + phosphate + 2 H(+). Its pathway is pyrimidine metabolism; CTP biosynthesis via de novo pathway; CTP from UDP: step 2/2. Allosterically activated by GTP, when glutamine is the substrate; GTP has no effect on the reaction when ammonia is the substrate. The allosteric effector GTP functions by stabilizing the protein conformation that binds the tetrahedral intermediate(s) formed during glutamine hydrolysis. Inhibited by the product CTP, via allosteric rather than competitive inhibition. Functionally, catalyzes the ATP-dependent amination of UTP to CTP with either L-glutamine or ammonia as the source of nitrogen. Regulates intracellular CTP levels through interactions with the four ribonucleotide triphosphates. The sequence is that of CTP synthase from Bacillus mycoides (strain KBAB4) (Bacillus weihenstephanensis).